The following is an 829-amino-acid chain: Periplasmic nitrate reductase (829 aa).

The segment at residues 1–36 is a signal peptide (tat-type signal); sequence MARRDFIKQTAAAAAATVAGVPLTGYTQNIVTESEA. Residues 39–95 enclose the 4Fe-4S Mo/W bis-MGD-type domain; that stretch reads LKWSKAPCRFCGTGCGVNVAVKDNQVVATHGDFNAEVNKGLNCVKGYFLSKIMYGSD. Cys-46, Cys-49, Cys-53, and Cys-81 together coordinate [4Fe-4S] cluster. Mo-bis(molybdopterin guanine dinucleotide) contacts are provided by residues Lys-83, Gln-150, Asn-175, Cys-179, 212-219, 243-247, 262-264, Met-373, Gln-377, Asn-483, 509-510, Lys-532, Asp-559, and 719-728; these read WGSNMAEM, STFEH, QSD, SD, and TGRVLEHWHS. Substrate is bound at residue Trp-795. Mo-bis(molybdopterin guanine dinucleotide) is bound by residues Asn-803 and Lys-820.

This sequence belongs to the prokaryotic molybdopterin-containing oxidoreductase family. NasA/NapA/NarB subfamily. In terms of assembly, component of the periplasmic nitrate reductase NapAB complex composed of NapA and NapB. [4Fe-4S] cluster is required as a cofactor. The cofactor is Mo-bis(molybdopterin guanine dinucleotide). Predicted to be exported by the Tat system. The position of the signal peptide cleavage has not been experimentally proven.

The protein localises to the periplasm. It catalyses the reaction 2 Fe(II)-[cytochrome] + nitrate + 2 H(+) = 2 Fe(III)-[cytochrome] + nitrite + H2O. Its function is as follows. Catalytic subunit of the periplasmic nitrate reductase complex NapAB. Receives electrons from NapB and catalyzes the reduction of nitrate to nitrite. This is Periplasmic nitrate reductase from Bordetella bronchiseptica (strain ATCC BAA-588 / NCTC 13252 / RB50) (Alcaligenes bronchisepticus).